A 367-amino-acid chain; its full sequence is Alanine racemase (367 aa).

Catalysis depends on K40, which acts as the Proton acceptor; specific for D-alanine. K40 carries the post-translational modification N6-(pyridoxal phosphate)lysine. R136 lines the substrate pocket. Residue Y263 is the Proton acceptor; specific for L-alanine of the active site. Residue M310 coordinates substrate.

Belongs to the alanine racemase family. Pyridoxal 5'-phosphate is required as a cofactor.

The enzyme catalyses L-alanine = D-alanine. It functions in the pathway amino-acid biosynthesis; D-alanine biosynthesis; D-alanine from L-alanine: step 1/1. In terms of biological role, catalyzes the interconversion of L-alanine and D-alanine. May also act on other amino acids. The protein is Alanine racemase (alr) of Streptococcus pneumoniae (strain 70585).